Here is a 291-residue protein sequence, read N- to C-terminus: Phosphate import ATP-binding protein PstB (291 aa).

Residues 44-286 enclose the ABC transporter domain; the sequence is VKAREVNVFY…PEEKRTQDYI (243 aa). 76–83 is a binding site for ATP; that stretch reads GPSGCGKS.

This sequence belongs to the ABC transporter superfamily. Phosphate importer (TC 3.A.1.7) family. In terms of assembly, the complex is composed of two ATP-binding proteins (PstB), two transmembrane proteins (PstC and PstA) and a solute-binding protein (PstS).

It is found in the cell inner membrane. It catalyses the reaction phosphate(out) + ATP + H2O = ADP + 2 phosphate(in) + H(+). Functionally, part of the ABC transporter complex PstSACB involved in phosphate import. Responsible for energy coupling to the transport system. This Chelativorans sp. (strain BNC1) protein is Phosphate import ATP-binding protein PstB.